Consider the following 392-residue polypeptide: Protein O-glucosyltransferase 1 (392 aa).

Residues 1–23 (MELGVSSQLWLWLLLLLLPPVPG) form the signal peptide. Disulfide bonds link C49-C56, C54-C357, C102-C108, and C263-C286. The N-linked (GlcNAc...) asparagine glycan is linked to N53. Residues 103-107 (MFPSR) form an interaction with the consensus sequence C-X-S-X-[PA]-C in peptide substrates region. The active-site Proton donor/acceptor is the D133. The interaction with the consensus sequence C-X-S-X-[PA]-C in peptide substrates stretch occupies residues 172–178 (AVWPIYP). Y177 lines the UDP-alpha-D-glucose pocket. A glycan (N-linked (GlcNAc...) asparagine) is linked at N204. UDP-alpha-D-glucose-binding positions include S212, R218, and 274 to 279 (VAASFR). N373 carries N-linked (GlcNAc...) asparagine glycosylation. The Prevents secretion from ER signature appears at 389 to 392 (KIEL).

It belongs to the glycosyltransferase 90 family.

The protein resides in the endoplasmic reticulum lumen. It carries out the reaction L-seryl-[EGF-like domain protein] + UDP-alpha-D-xylose = 3-O-(beta-D-xylosyl)-L-seryl-[EGF-like domain protein] + UDP + H(+). The enzyme catalyses L-seryl-[EGF-like domain protein] + UDP-alpha-D-glucose = 3-O-(beta-D-glucosyl)-L-seryl-[EGF-like domain protein] + UDP + H(+). It participates in protein modification; protein glycosylation. Its function is as follows. Dual specificity glycosyltransferase that catalyzes the transfer of glucose and xylose from UDP-glucose and UDP-xylose, respectively, to a serine residue found in the consensus sequence of C-X-S-X-P-C. Specifically targets extracellular EGF repeats of protein such as CRB2, F7, F9 and NOTCH2. Acts as a positive regulator of Notch signaling by mediating O-glucosylation of Notch, leading to regulate muscle development. Notch glucosylation does not affect Notch ligand binding. Required during early development to promote gastrulation: acts by mediating O-glucosylation of CRB2, which is required for CRB2 localization to the cell membrane. This chain is Protein O-glucosyltransferase 1 (POGLUT1), found in Bos taurus (Bovine).